The chain runs to 902 residues: Leucine-rich repeat-containing G-protein coupled receptor 5 (902 aa).

The N-terminal stretch at 1-22 (MDTSKTSFFLFSVLCSLQLVGA) is a signal peptide. At 23 to 558 (ARPGKQQRSC…HLFGSWLTRT (536 aa)) the chain is on the extracellular side. Cystine bridges form between cysteine 32–cysteine 38 and cysteine 36–cysteine 49. In terms of domain architecture, LRRNT spans 32 to 61 (CPTPCECEQEGMLVRVDCSDRALTSLPRNL). 17 LRR repeats span residues 41–61 (EGMLVRVDCSDRALTSLPRNL), 62–85 (SIFTSYLDLSMNNITNLPSNVMHN), 86–109 (LHFLEELRLAGNDLTYIPKGAFAG), 111–133 (GSLKVLMLQNNLLRQVPSEALHN), 134–157 (LRSLQSLRLDANHISYVPPSSFNG), 159–181 (FSLRHLWLDDNSLTEIPVRALES), 182–205 (LSALQAMTLALNKIHHIPDYAFRN), 207–229 (SSLVVLHLHNNRIYSLGKKCFDG), 230–253 (LHSLETLDLNYNNLDEFPAAIKTL), 254–276 (KNLKELGFHSNNIKSIPEQAFIG), 278–300 (PSLITIHFYDNPIQHVGRSAFQH), 302–324 (PELRTLILNGASQITEFPDLTGT), 325–347 (TSLESLTLTGAQLVYLPSAVCTQ), 348–372 (LPNLQVLDLSYNHIKDLPSFSGCQR), 374–393 (QKIDLRHNEVYEIRSTTFQQ), 394–417 (LVGLRSLDLAWNKIAVIHPNSFSS), and 418–441 (LPSLIKLDLSSNHLTSFPVTGLHG). N-linked (GlcNAc...) asparagine glycosylation is found at asparagine 60 and asparagine 74. A glycan (N-linked (GlcNAc...) asparagine) is linked at asparagine 205. An intrachain disulfide couples cysteine 345 to cysteine 370. A disulfide bridge links cysteine 476 with cysteine 537. Asparagine 496 carries an N-linked (GlcNAc...) asparagine glycan. The helical transmembrane segment at 559-579 (GVWLIVLLSFVCNALVIATVF) threads the bilayer. Over 580–589 (RPLSYVPSIK) the chain is Cytoplasmic. The helical transmembrane segment at 590-610 (LLIGLIAIMNTLMGLSSGVLA) threads the bilayer. The stretch at 598–619 (MNTLMGLSSGVLATVDALTFGN) is one LRR 18 repeat. Over 611 to 634 (TVDALTFGNFAQYGAWWESGVGCQ) the chain is Extracellular. A disulfide bridge links cysteine 633 with cysteine 708. A helical membrane pass occupies residues 635–655 (ITGFLSVFAAETSIFLLTVAA). The Cytoplasmic segment spans residues 656-678 (LERGFSIKCTTKFETKSSFINVK). A helical membrane pass occupies residues 679–699 (LSIVFCFLLSIVIAVSPLLSG). The Extracellular portion of the chain corresponds to 700-718 (STYGTSPLCFPLLFGDPSS). The helical transmembrane segment at 719 to 739 (MGFMVALVLLNSLCFLVMTIA) threads the bilayer. The Cytoplasmic portion of the chain corresponds to 740–763 (YTKLYCSLEKGELENIWDCSMVKH). The helical transmembrane segment at 764–784 (IALLLFTNCILYCPVAFLSFS) threads the bilayer. At 785-798 (SLLNLTFISPEVNK) the chain is on the extracellular side. N-linked (GlcNAc...) asparagine glycans are attached at residues asparagine 788 and asparagine 797. The helical transmembrane segment at 799–819 (SILLLIIPLPACLNPLLYILF) threads the bilayer. Residues 820–902 (NPHFKEDIGS…LSAVAFVPCH (83 aa)) are Cytoplasmic-facing.

Belongs to the G-protein coupled receptor 1 family.

It is found in the cell membrane. The protein resides in the golgi apparatus. It localises to the trans-Golgi network membrane. Functionally, receptor for R-spondins that potentiates the canonical Wnt signaling pathway and acts as a stem cell marker of the intestinal epithelium and the hair follicle. Upon binding to R-spondins (RSPO1, RSPO2, RSPO3 or RSPO4), associates with phosphorylated LRP6 and frizzled receptors that are activated by extracellular Wnt receptors, triggering the canonical Wnt signaling pathway to increase expression of target genes. In contrast to classical G-protein coupled receptors, does not activate heterotrimeric G-proteins to transduce the signal. Involved in the development and/or maintenance of the adult intestinal stem cells during postembryonic development. The chain is Leucine-rich repeat-containing G-protein coupled receptor 5 (lgr5) from Xenopus tropicalis (Western clawed frog).